A 409-amino-acid chain; its full sequence is Divalent metal cation transporter MntH (409 aa).

The next 11 helical transmembrane spans lie at leucine 19 to alanine 39, alanine 46 to isoleucine 66, tryptophan 98 to isoleucine 118, leucine 122 to isoleucine 142, leucine 155 to serine 175, alanine 196 to histidine 216, isoleucine 241 to phenylalanine 261, isoleucine 290 to glycine 310, phenylalanine 320 to leucine 340, isoleucine 348 to leucine 368, and isoleucine 388 to leucine 408.

The protein belongs to the NRAMP family.

The protein localises to the cell inner membrane. H(+)-stimulated, divalent metal cation uptake system. This Yersinia enterocolitica serotype O:8 / biotype 1B (strain NCTC 13174 / 8081) protein is Divalent metal cation transporter MntH.